We begin with the raw amino-acid sequence, 233 residues long: Octanoyltransferase (233 aa).

The region spanning 34–214 (GQAPSTVLLL…EFSAREATLI (181 aa)) is the BPL/LPL catalytic domain. Substrate-binding positions include 72-79 (RGGKLTWH), 144-146 (AIG), and 157-159 (GFS). The Acyl-thioester intermediate role is filled by Cys175.

It belongs to the LipB family.

It is found in the cytoplasm. It carries out the reaction octanoyl-[ACP] + L-lysyl-[protein] = N(6)-octanoyl-L-lysyl-[protein] + holo-[ACP] + H(+). Its pathway is protein modification; protein lipoylation via endogenous pathway; protein N(6)-(lipoyl)lysine from octanoyl-[acyl-carrier-protein]: step 1/2. Its function is as follows. Catalyzes the transfer of endogenously produced octanoic acid from octanoyl-acyl-carrier-protein onto the lipoyl domains of lipoate-dependent enzymes. Lipoyl-ACP can also act as a substrate although octanoyl-ACP is likely to be the physiological substrate. This is Octanoyltransferase from Renibacterium salmoninarum (strain ATCC 33209 / DSM 20767 / JCM 11484 / NBRC 15589 / NCIMB 2235).